We begin with the raw amino-acid sequence, 420 residues long: Putative zinc metalloprotease Lmo1318 (420 aa).

Residue His18 coordinates Zn(2+). The active site involves Glu19. His22 contributes to the Zn(2+) binding site. 4 consecutive transmembrane segments (helical) span residues 172–194 (TIFAGPLFNFILAILIFTALAFV), 304–326 (NWIVQIFTILGNMFTGGFSLDML), 347–369 (VLNWTAVLSINLGIVNLLPLPAL), and 393–412 (GIIHFAGFALLMVLMILVTW). Residues 176–267 (GPLFNFILAI…DGKTQDIDVK (92 aa)) form the PDZ domain.

It belongs to the peptidase M50B family. Zn(2+) is required as a cofactor.

The protein resides in the cell membrane. The polypeptide is Putative zinc metalloprotease Lmo1318 (Listeria monocytogenes serovar 1/2a (strain ATCC BAA-679 / EGD-e)).